The following is a 183-amino-acid chain: Beta-defensin 129 (183 aa).

The signal sequence occupies residues 1-19; the sequence is MKLLFPVFASLMLQYQVNT. 3 cysteine pairs are disulfide-bonded: Cys27–Cys53, Cys34–Cys48, and Cys38–Cys54. The segment at 141–183 is disordered; sequence TATSTKSNTKESRDSATASPPPAPPPPNILPTPSLELEKAEEQ. The span at 159–170 shows a compositional bias: pro residues; it reads SPPPAPPPPNIL.

Belongs to the beta-defensin family.

Its subcellular location is the secreted. Functionally, has antibacterial activity. This is Beta-defensin 129 (DEFB129) from Pongo pygmaeus (Bornean orangutan).